The chain runs to 90 residues: Probable Fe(2+)-trafficking protein (90 aa).

This sequence belongs to the Fe(2+)-trafficking protein family.

Functionally, could be a mediator in iron transactions between iron acquisition and iron-requiring processes, such as synthesis and/or repair of Fe-S clusters in biosynthetic enzymes. This is Probable Fe(2+)-trafficking protein from Cupriavidus pinatubonensis (strain JMP 134 / LMG 1197) (Cupriavidus necator (strain JMP 134)).